Reading from the N-terminus, the 794-residue chain is Phenylalanine--tRNA ligase beta subunit (794 aa).

Residues 39–154 (SSSFSSIITA…ANTPLGESAC (116 aa)) enclose the tRNA-binding domain. The region spanning 403–481 (PPSPTLTLRT…QPWKIEKKKA (79 aa)) is the B5 domain. Residues Asp-457, Asp-463, Glu-466, and Glu-467 each contribute to the Mg(2+) site. Residues 697 to 793 (PIYPSSFRDI…QLDDTKGTID (97 aa)) form the FDX-ACB domain.

The protein belongs to the phenylalanyl-tRNA synthetase beta subunit family. Type 1 subfamily. Tetramer of two alpha and two beta subunits. The cofactor is Mg(2+).

The protein localises to the cytoplasm. The catalysed reaction is tRNA(Phe) + L-phenylalanine + ATP = L-phenylalanyl-tRNA(Phe) + AMP + diphosphate + H(+). The sequence is that of Phenylalanine--tRNA ligase beta subunit from Chlamydia abortus (strain DSM 27085 / S26/3) (Chlamydophila abortus).